The primary structure comprises 90 residues: Acylphosphatase (90 aa).

In terms of domain architecture, Acylphosphatase-like spans 3 to 90 (RVLIKLTGKV…DIYLDFSIVR (88 aa)). Residues Arg18 and Asn36 contribute to the active site.

Belongs to the acylphosphatase family.

The catalysed reaction is an acyl phosphate + H2O = a carboxylate + phosphate + H(+). The polypeptide is Acylphosphatase (acyP) (Shewanella oneidensis (strain ATCC 700550 / JCM 31522 / CIP 106686 / LMG 19005 / NCIMB 14063 / MR-1)).